Here is a 246-residue protein sequence, read N- to C-terminus: Putative carbonic anhydrase 3 (246 aa).

An Alpha-carbonic anhydrase domain is found at 3 to 244 (GHWSYCDDDE…LNDRKIVHIV (242 aa)). Histidine 61 functions as the Proton acceptor in the catalytic mechanism. Residues histidine 91, histidine 93, and histidine 116 each coordinate Zn(2+). Residue 187-188 (TT) participates in substrate binding.

It belongs to the alpha-carbonic anhydrase family. Zn(2+) serves as cofactor.

It carries out the reaction hydrogencarbonate + H(+) = CO2 + H2O. Its function is as follows. Reversible hydration of carbon dioxide. The sequence is that of Putative carbonic anhydrase 3 (cah-3) from Caenorhabditis elegans.